We begin with the raw amino-acid sequence, 83 residues long: Kunitz-type serine protease inhibitor nigrescinin-1 (83 aa).

The first 24 residues, 1-24 (MSSGGLLLLLGLLTLWEALTPVSS), serve as a signal peptide directing secretion. The BPTI/Kunitz inhibitor domain occupies 31 to 81 (CELPEDSGPCKGLFHVFYYNSDQNQCLEFIYGGCYGNANNFKTIEECKRTC). Intrachain disulfides connect Cys40–Cys64 and Cys56–Cys77.

The protein belongs to the venom Kunitz-type family. As to expression, expressed by the venom gland.

The protein localises to the secreted. Serine protease inhibitor. This chain is Kunitz-type serine protease inhibitor nigrescinin-1, found in Cryptophis nigrescens (Eastern small-eyed snake).